A 112-amino-acid polypeptide reads, in one-letter code: Peptidyl-prolyl cis-trans isomerase (112 aa).

A disordered region spans residues Met-1 to Arg-22. The region spanning Gly-20 to Asn-108 is the PPIase FKBP-type domain.

It belongs to the FKBP-type PPIase family. FKBP1 subfamily.

The protein resides in the cytoplasm. It localises to the nucleus. The catalysed reaction is [protein]-peptidylproline (omega=180) = [protein]-peptidylproline (omega=0). In terms of biological role, PPIases accelerate the folding of proteins. It catalyzes the cis-trans isomerization of proline imidic peptide bonds in oligopeptides. Has an important role in sexual development and serves as the target for rapamycin action. This is Peptidyl-prolyl cis-trans isomerase (fkh1) from Schizosaccharomyces pombe (strain 972 / ATCC 24843) (Fission yeast).